Reading from the N-terminus, the 1213-residue chain is DNA-directed RNA polymerase subunit beta' (1213 aa).

Cys60, Cys62, Cys75, and Cys78 together coordinate Zn(2+). Residues Asp449, Asp451, and Asp453 each contribute to the Mg(2+) site. Cys818, Cys892, Cys899, and Cys902 together coordinate Zn(2+).

Belongs to the RNA polymerase beta' chain family. The RNAP catalytic core consists of 2 alpha, 1 beta, 1 beta' and 1 omega subunit. When a sigma factor is associated with the core the holoenzyme is formed, which can initiate transcription. The cofactor is Mg(2+). Requires Zn(2+) as cofactor.

The catalysed reaction is RNA(n) + a ribonucleoside 5'-triphosphate = RNA(n+1) + diphosphate. Functionally, DNA-dependent RNA polymerase catalyzes the transcription of DNA into RNA using the four ribonucleoside triphosphates as substrates. The protein is DNA-directed RNA polymerase subunit beta' of Lactiplantibacillus plantarum (strain ATCC BAA-793 / NCIMB 8826 / WCFS1) (Lactobacillus plantarum).